The chain runs to 226 residues: Leucyl/phenylalanyl-tRNA--protein transferase (226 aa).

It belongs to the L/F-transferase family.

The protein resides in the cytoplasm. The enzyme catalyses N-terminal L-lysyl-[protein] + L-leucyl-tRNA(Leu) = N-terminal L-leucyl-L-lysyl-[protein] + tRNA(Leu) + H(+). It catalyses the reaction N-terminal L-arginyl-[protein] + L-leucyl-tRNA(Leu) = N-terminal L-leucyl-L-arginyl-[protein] + tRNA(Leu) + H(+). The catalysed reaction is L-phenylalanyl-tRNA(Phe) + an N-terminal L-alpha-aminoacyl-[protein] = an N-terminal L-phenylalanyl-L-alpha-aminoacyl-[protein] + tRNA(Phe). Functions in the N-end rule pathway of protein degradation where it conjugates Leu, Phe and, less efficiently, Met from aminoacyl-tRNAs to the N-termini of proteins containing an N-terminal arginine or lysine. The protein is Leucyl/phenylalanyl-tRNA--protein transferase of Stutzerimonas stutzeri (strain A1501) (Pseudomonas stutzeri).